The chain runs to 380 residues: MTLVEEILDAKAGEVVIRNVDLVYAHDGTMPLIIEAFNKVFNSVKARAYVFFDHVYPAPTVKVANLQKEIREFARRHGIPVVEGKGISHQLVVEMGLAEKSRIVVGGDSHTPTLGALGVFAVGMGATDVAVVLGLGKTWLRVPESVAVIFEGKPSRTTMAADVMIRLITSLRNYDMNYKALEFFNVPFTADERLTLTNFSVEANAKTALIGEEYDGRNYIKEISFELSSLGPMVAKPFSPANGVEVEKVEGTKIDQVFIGSCTNGRFEHIKRAAEILKGEEVAVRTIIGPASVNVYKRMVREGIVDILLDAGATILPPGCGPCLGRHMGVLGDKEVVLSTTNRNFRGRMGSPTAEIYLASPLTAAVSALYGEITSPGGEV.

The [4Fe-4S] cluster site is built by Cys262, Cys320, and Cys323.

The protein belongs to the aconitase/IPM isomerase family. LeuC type 2 subfamily. In terms of assembly, heterodimer of LeuC and LeuD. Requires [4Fe-4S] cluster as cofactor.

The catalysed reaction is (2R,3S)-3-isopropylmalate = (2S)-2-isopropylmalate. It functions in the pathway amino-acid biosynthesis; L-leucine biosynthesis; L-leucine from 3-methyl-2-oxobutanoate: step 2/4. Functionally, catalyzes the isomerization between 2-isopropylmalate and 3-isopropylmalate, via the formation of 2-isopropylmaleate. This is 3-isopropylmalate dehydratase large subunit from Pyrococcus horikoshii (strain ATCC 700860 / DSM 12428 / JCM 9974 / NBRC 100139 / OT-3).